Here is a 234-residue protein sequence, read N- to C-terminus: Enolase-phosphatase E1 (234 aa).

The tract at residues 212–234 (RPGNYPQPQHSHFKISSFEGLNP) is disordered.

This sequence belongs to the HAD-like hydrolase superfamily. MasA/MtnC family. In terms of assembly, monomer. Requires Mg(2+) as cofactor.

The enzyme catalyses 5-methylsulfanyl-2,3-dioxopentyl phosphate + H2O = 1,2-dihydroxy-5-(methylsulfanyl)pent-1-en-3-one + phosphate. The protein operates within amino-acid biosynthesis; L-methionine biosynthesis via salvage pathway; L-methionine from S-methyl-5-thio-alpha-D-ribose 1-phosphate: step 3/6. Its pathway is amino-acid biosynthesis; L-methionine biosynthesis via salvage pathway; L-methionine from S-methyl-5-thio-alpha-D-ribose 1-phosphate: step 4/6. In terms of biological role, bifunctional enzyme that catalyzes the enolization of 2,3-diketo-5-methylthiopentyl-1-phosphate (DK-MTP-1-P) into the intermediate 2-hydroxy-3-keto-5-methylthiopentenyl-1-phosphate (HK-MTPenyl-1-P), which is then dephosphorylated to form the acireductone 1,2-dihydroxy-3-keto-5-methylthiopentene (DHK-MTPene). The sequence is that of Enolase-phosphatase E1 from Leptospira interrogans serogroup Icterohaemorrhagiae serovar copenhageni (strain Fiocruz L1-130).